Reading from the N-terminus, the 442-residue chain is D-inositol 3-phosphate glycosyltransferase (442 aa).

Histidine 15 contacts 1D-myo-inositol 3-phosphate. UDP-N-acetyl-alpha-D-glucosamine is bound by residues 21-22 and glycine 29; that span reads QP. Residues 26 to 31, lysine 84, tyrosine 117, threonine 141, and arginine 161 each bind 1D-myo-inositol 3-phosphate; that span reads DAGGMN. UDP-N-acetyl-alpha-D-glucosamine is bound by residues arginine 235, lysine 240, and glutamine 299. Residues tyrosine 308, arginine 309, and serine 311 each coordinate Mg(2+). Residues glutamate 321 and glutamate 329 each contribute to the UDP-N-acetyl-alpha-D-glucosamine site. Threonine 335 serves as a coordination point for Mg(2+).

It belongs to the glycosyltransferase group 1 family. MshA subfamily. Homodimer.

It catalyses the reaction 1D-myo-inositol 3-phosphate + UDP-N-acetyl-alpha-D-glucosamine = 1D-myo-inositol 2-acetamido-2-deoxy-alpha-D-glucopyranoside 3-phosphate + UDP + H(+). Catalyzes the transfer of a N-acetyl-glucosamine moiety to 1D-myo-inositol 3-phosphate to produce 1D-myo-inositol 2-acetamido-2-deoxy-glucopyranoside 3-phosphate in the mycothiol biosynthesis pathway. The polypeptide is D-inositol 3-phosphate glycosyltransferase (Rhodococcus erythropolis (strain PR4 / NBRC 100887)).